Here is a 356-residue protein sequence, read N- to C-terminus: DNA polymerase IV (356 aa).

Positions Ile-6 to Gly-187 constitute a UmuC domain. Mg(2+)-binding residues include Asp-10 and Asp-105. Glu-106 is an active-site residue.

Belongs to the DNA polymerase type-Y family. Monomer. It depends on Mg(2+) as a cofactor.

The protein localises to the cytoplasm. It catalyses the reaction DNA(n) + a 2'-deoxyribonucleoside 5'-triphosphate = DNA(n+1) + diphosphate. In terms of biological role, poorly processive, error-prone DNA polymerase involved in untargeted mutagenesis. Copies undamaged DNA at stalled replication forks, which arise in vivo from mismatched or misaligned primer ends. These misaligned primers can be extended by PolIV. Exhibits no 3'-5' exonuclease (proofreading) activity. May be involved in translesional synthesis, in conjunction with the beta clamp from PolIII. The sequence is that of DNA polymerase IV from Staphylococcus epidermidis (strain ATCC 12228 / FDA PCI 1200).